The following is a 395-amino-acid chain: 8-amino-7-oxononanoate synthase (395 aa).

A substrate-binding site is contributed by Arg-24. 111–112 (GF) contributes to the pyridoxal 5'-phosphate binding site. His-136 lines the substrate pocket. Pyridoxal 5'-phosphate contacts are provided by residues Ser-184, 209–212 (DDAH), and 240–243 (TLSK). N6-(pyridoxal phosphate)lysine is present on Lys-243. Thr-357 contacts substrate.

It belongs to the class-II pyridoxal-phosphate-dependent aminotransferase family. BioF subfamily. In terms of assembly, homodimer. Pyridoxal 5'-phosphate serves as cofactor.

It catalyses the reaction 6-carboxyhexanoyl-[ACP] + L-alanine + H(+) = (8S)-8-amino-7-oxononanoate + holo-[ACP] + CO2. It functions in the pathway cofactor biosynthesis; biotin biosynthesis. Catalyzes the decarboxylative condensation of pimeloyl-[acyl-carrier protein] and L-alanine to produce 8-amino-7-oxononanoate (AON), [acyl-carrier protein], and carbon dioxide. The sequence is that of 8-amino-7-oxononanoate synthase from Thermoanaerobacter pseudethanolicus (strain ATCC 33223 / 39E) (Clostridium thermohydrosulfuricum).